A 355-amino-acid polypeptide reads, in one-letter code: Molybdenum import ATP-binding protein ModC (355 aa).

The region spanning 1-233 (MTLIVEAKQR…PSTASDRREA (233 aa)) is the ABC transporter domain. 31–38 (GRSGSGKT) is an ATP binding site. The Mop domain maps to 291-355 (GLSALNILEA…AIIKTVALEA (65 aa)).

Belongs to the ABC transporter superfamily. Molybdate importer (TC 3.A.1.8) family. In terms of assembly, the complex is composed of two ATP-binding proteins (ModC), two transmembrane proteins (ModB) and a solute-binding protein (ModA).

It localises to the cell inner membrane. It carries out the reaction molybdate(out) + ATP + H2O = molybdate(in) + ADP + phosphate + H(+). Functionally, part of the ABC transporter complex ModABC involved in molybdenum import. Responsible for energy coupling to the transport system. The chain is Molybdenum import ATP-binding protein ModC from Rhizobium johnstonii (strain DSM 114642 / LMG 32736 / 3841) (Rhizobium leguminosarum bv. viciae).